Consider the following 273-residue polypeptide: MSPKRDGLGTGDGLHSQVLQEQVSTGDNLHECDSQGPSKHTLVREGKTYKCKECGSVFNKNSLLVRHQQIHTGVKPYECQECGKAFPEKVDFVRHVRIHTGEKPCKCVECGKVFNRRSHLLCHHQIHTGEKPYECSECGRTFSYHSVFIQHRMTHTGEKLFGCKECGKSFYYNSSLTRHMKIHTREKPYKCSECGKTFTYHSVFFRHSMTHTAGKPYECKECGKGFYYSYSLTRHTRSHTGEKPYECLEHRKAFGYHSAFAQQSKIHSGGKNL.

7 consecutive C2H2-type zinc fingers follow at residues 49 to 71, 77 to 99, 103 to 127, 133 to 155, 161 to 183, 189 to 211, and 217 to 239; these read YKCKECGSVFNKNSLLVRHQQIH, YECQECGKAFPEKVDFVRHVRIH, KPCKCVECGKVFNRRSHLLCHHQIH, YECSECGRTFSYHSVFIQHRMTH, FGCKECGKSFYYNSSLTRHMKIH, YKCSECGKTFTYHSVFFRHSMTH, and YECKECGKGFYYSYSLTRHTRSH.

It belongs to the krueppel C2H2-type zinc-finger protein family.

The protein localises to the nucleus. May be involved in transcriptional regulation. This chain is Zinc finger protein 80 (ZNF80), found in Pongo pygmaeus (Bornean orangutan).